We begin with the raw amino-acid sequence, 114 residues long: UPF0102 protein HP_0823 (114 aa).

It belongs to the UPF0102 family.

The chain is UPF0102 protein HP_0823 from Helicobacter pylori (strain ATCC 700392 / 26695) (Campylobacter pylori).